The primary structure comprises 1349 residues: MERDVDADIRLGSELLSKYPLDINVAALIRNYTAGELFDNLRLFFGASPEDYNLQFEAIFGIYCNKLEWIHFLGTALGITSHVVRFPDAEKLSVGKIVFNVTIPRVAVPSGVPNTKNATAVVVKYTERMPIGISFELSFAALEKLRLSFQDATLLDKLINIQAINNTLQCINNSANALQRGLINVVLTKLLHKAPPFFILKYLEEPTGGISSNNSVNRSNAVFSIKSLLPQCLFILNRVENKTSILNILTEMTALVKHSIMVDSSLYTTSGGDEVSGVLVTTSNVLNVITNMFSKLIHKASVVAPVAYGEFIMSKENAVTALAHHAIIADFDQYVQNAQNLTAGPLKKSNFLEMGQDRSTISVQLMQIGDTLVALEQLDKVYRNTMTHNPLDNRLELTFHTVIGLHLPKSISYSTMDAKVSLNSTIRNNVPTSIYFYDKDFTLQKVEFTDCLRTLCHPIFNDGQVCARIFTREIKDGERLCDGHQYVLDNDPPYPNEQHMRNFYGDAPPPMTTNQLKNEYQDLEFFKPSNKCLYTELHPMYDFSDVMIDEAVGQICTPRIMIGNMPQALAPSEFQEIRSMQILEISKNVYPQLYETTVGLATQTLNNPEYPEICYVISVLVHGNRDAFAAAHTLIVACINNAYTTKNMLPFIHDFDMVRLIANNMTDSRILSDAHMHYKRLWSLIGFLKKLVETGGLHGHLVDDPMLCYLNALFDKRLLPPIIHHFPAMKQDMNVKANNRPLNIRGAELRDYDVSNLERMINVGGHVVYRDDIIEAEDLTVSSKIYYYCMLPALTNNHMCGASLLLNQFIPDGFFNSDFIKPEALYAAEQTFEASVMLRRLLEQAGVSTARRPELHEIMTSFFRLLLRMPENARVLEITGPLDHAQRHCMPAFQAVHHSLYDGFLLVAPPLILAEYIQAIPFHKFYSDPVIAQACAPYIREFLTRYPQCNRTDGGFPTPPYFSREYFNWHRTPFFKYSDTCLNTVKSMMTLACMHTKFSPVSTYLQSRARIHPGFAVTLVRTDLFDVERILYSSKSSMSVIIGDPYVYKEKTDIHTTYHITQDISTVDMGMGYSAVTCPAYLRRIVSDMGATLQDLFKVFPVASFGNDELDEWIRTHTGGTHASLFDPNTIDILTFGQVNVNEQPGILIGQKAVVECVVTPVTAPLHYFKIPNNPRGRASCTLAIDPERKQDLFRVIYDHSIPDAQSFLSTANPWGSIWGSIGDVMYNEFHREQIGYNSRIYSPCKQFFSLDDITISNRTLFKITGEYNSRSKSCIDGDNETQYVCVEGTSDMVEKPCIIFQESYPLLSASSEGLLESHIKPPAVRMSETHFQNYLIEEVIPITQILKK.

This sequence belongs to the herpesviridae major capsid protein family. Homomultimer. Makes the hexons and eleven out of twelve pentons. Interacts with triplex proteins 1/TRX1 and 2/TRX2; adjacent capsomers are linked together in groups of three by triplexes, heterotrimeric complexes composed of one molecule of TRX1 and two molecules of TRX2. Interacts with scaffold protein; this interaction allows efficient MCP transport to the host nucleus. Interacts with capsid vertex component 2/CVC2. Interacts with the small capsomere-interacting protein/SCP.

It is found in the virion. It localises to the host nucleus. Its function is as follows. Self-assembles to form an icosahedral capsid with a T=16 symmetry, about 200 nm in diameter, and consisting of 150 hexons and 12 pentons (total of 162 capsomers). Hexons form the edges and faces of the capsid and are each composed of six MCP molecules. In contrast, one penton is found at each of the 12 vertices. Eleven of the pentons are MCP pentamers, while the last vertex is occupied by the portal complex. The capsid is surrounded by a layer of proteinaceous material designated the tegument which, in turn, is enclosed in an envelope of host cell-derived lipids containing virus-encoded glycoproteins. The chain is Major capsid protein from Elephas maximus (Indian elephant).